Reading from the N-terminus, the 262-residue chain is uncharacterized protein (262 aa).

This is an uncharacterized protein from Acanthamoeba polyphaga mimivirus (APMV).